A 295-amino-acid chain; its full sequence is Nitrogenase iron protein (295 aa).

Residue 11–18 (GKGGIGKS) participates in ATP binding. [4Fe-4S] cluster is bound at residue C99. R102 is subject to ADP-ribosylarginine; by dinitrogenase reductase ADP-ribosyltransferase. Residue C133 participates in [4Fe-4S] cluster binding.

It belongs to the NifH/BchL/ChlL family. As to quaternary structure, homodimer. [4Fe-4S] cluster is required as a cofactor. The reversible ADP-ribosylation of Arg-102 inactivates the nitrogenase reductase and regulates nitrogenase activity.

The enzyme catalyses N2 + 8 reduced [2Fe-2S]-[ferredoxin] + 16 ATP + 16 H2O = H2 + 8 oxidized [2Fe-2S]-[ferredoxin] + 2 NH4(+) + 16 ADP + 16 phosphate + 6 H(+). In terms of biological role, the key enzymatic reactions in nitrogen fixation are catalyzed by the nitrogenase complex, which has 2 components: the iron protein and the molybdenum-iron protein. This Zymomonas mobilis subsp. mobilis (strain ATCC 31821 / ZM4 / CP4) protein is Nitrogenase iron protein.